Reading from the N-terminus, the 368-residue chain is 1-deoxy-D-xylulose 5-phosphate reductoisomerase (368 aa).

Residues Thr10, Gly11, Ser12, Ile13, Gln38, and Asn100 each coordinate NADPH. Lys101 provides a ligand contact to 1-deoxy-D-xylulose 5-phosphate. Residue Glu102 coordinates NADPH. Residue Asp125 coordinates Mn(2+). 1-deoxy-D-xylulose 5-phosphate is bound by residues Ser126, Glu127, Ser151, and His172. Glu127 is a binding site for Mn(2+). Residue Gly178 participates in NADPH binding. Residues Ser185, Asn190, Lys191, and Glu194 each coordinate 1-deoxy-D-xylulose 5-phosphate. Glu194 provides a ligand contact to Mn(2+).

It belongs to the DXR family. The cofactor is Mg(2+). Mn(2+) serves as cofactor.

It catalyses the reaction 2-C-methyl-D-erythritol 4-phosphate + NADP(+) = 1-deoxy-D-xylulose 5-phosphate + NADPH + H(+). It participates in isoprenoid biosynthesis; isopentenyl diphosphate biosynthesis via DXP pathway; isopentenyl diphosphate from 1-deoxy-D-xylulose 5-phosphate: step 1/6. Functionally, catalyzes the NADPH-dependent rearrangement and reduction of 1-deoxy-D-xylulose-5-phosphate (DXP) to 2-C-methyl-D-erythritol 4-phosphate (MEP). The sequence is that of 1-deoxy-D-xylulose 5-phosphate reductoisomerase from Tropheryma whipplei (strain Twist) (Whipple's bacillus).